We begin with the raw amino-acid sequence, 196 residues long: Imidazole glycerol phosphate synthase subunit HisH (196 aa).

Residues 2 to 196 (KVAVIKYNAG…ERIIKNFLEL (195 aa)) enclose the Glutamine amidotransferase type-1 domain. Catalysis depends on C77, which acts as the Nucleophile. Catalysis depends on residues H178 and E180.

Heterodimer of HisH and HisF.

The protein resides in the cytoplasm. It catalyses the reaction 5-[(5-phospho-1-deoxy-D-ribulos-1-ylimino)methylamino]-1-(5-phospho-beta-D-ribosyl)imidazole-4-carboxamide + L-glutamine = D-erythro-1-(imidazol-4-yl)glycerol 3-phosphate + 5-amino-1-(5-phospho-beta-D-ribosyl)imidazole-4-carboxamide + L-glutamate + H(+). The catalysed reaction is L-glutamine + H2O = L-glutamate + NH4(+). The protein operates within amino-acid biosynthesis; L-histidine biosynthesis; L-histidine from 5-phospho-alpha-D-ribose 1-diphosphate: step 5/9. In terms of biological role, IGPS catalyzes the conversion of PRFAR and glutamine to IGP, AICAR and glutamate. The HisH subunit catalyzes the hydrolysis of glutamine to glutamate and ammonia as part of the synthesis of IGP and AICAR. The resulting ammonia molecule is channeled to the active site of HisF. The sequence is that of Imidazole glycerol phosphate synthase subunit HisH from Bacteroides fragilis (strain YCH46).